The following is a 1438-amino-acid chain: DNA-directed RNA polymerase subunit beta' (1438 aa).

Positions 72, 74, 87, and 90 each coordinate Zn(2+). Positions 483, 485, and 487 each coordinate Mg(2+). Zn(2+) contacts are provided by cysteine 831, cysteine 905, cysteine 912, and cysteine 915.

It belongs to the RNA polymerase beta' chain family. The RNAP catalytic core consists of 2 alpha, 1 beta, 1 beta' and 1 omega subunit. When a sigma factor is associated with the core the holoenzyme is formed, which can initiate transcription. The cofactor is Mg(2+). Requires Zn(2+) as cofactor.

The enzyme catalyses RNA(n) + a ribonucleoside 5'-triphosphate = RNA(n+1) + diphosphate. Functionally, DNA-dependent RNA polymerase catalyzes the transcription of DNA into RNA using the four ribonucleoside triphosphates as substrates. This is DNA-directed RNA polymerase subunit beta' from Flavobacterium psychrophilum (strain ATCC 49511 / DSM 21280 / CIP 103535 / JIP02/86).